The sequence spans 561 residues: DNA ligase B (561 aa).

Lys124 acts as the N6-AMP-lysine intermediate in catalysis.

This sequence belongs to the NAD-dependent DNA ligase family. LigB subfamily.

The enzyme catalyses NAD(+) + (deoxyribonucleotide)n-3'-hydroxyl + 5'-phospho-(deoxyribonucleotide)m = (deoxyribonucleotide)n+m + AMP + beta-nicotinamide D-nucleotide.. Catalyzes the formation of phosphodiester linkages between 5'-phosphoryl and 3'-hydroxyl groups in double-stranded DNA using NAD as a coenzyme and as the energy source for the reaction. In Cronobacter sakazakii (strain ATCC BAA-894) (Enterobacter sakazakii), this protein is DNA ligase B.